The chain runs to 199 residues: Recombination protein RecR (199 aa).

Residues 57 to 72 form a C4-type zinc finger; sequence CQKCRTFTEQSLCPIC. In terms of domain architecture, Toprim spans 81-176; it reads DTLCVVETPA…AVSRIAHGVP (96 aa).

Belongs to the RecR family.

May play a role in DNA repair. It seems to be involved in an RecBC-independent recombinational process of DNA repair. It may act with RecF and RecO. This Shewanella amazonensis (strain ATCC BAA-1098 / SB2B) protein is Recombination protein RecR.